The chain runs to 145 residues: uncharacterized protein (145 aa).

The tract at residues 62 to 145 (LPSVGGRMTA…QLPQQGGCPG (84 aa)) is disordered. The segment covering 84–95 (ASSPEDPPLPHP) has biased composition (pro residues).

This is an uncharacterized protein from Homo sapiens (Human).